The chain runs to 503 residues: Lysine--tRNA ligase (503 aa).

Mg(2+) is bound by residues E410 and E417.

It belongs to the class-II aminoacyl-tRNA synthetase family. Homodimer. Mg(2+) serves as cofactor.

The protein localises to the cytoplasm. The enzyme catalyses tRNA(Lys) + L-lysine + ATP = L-lysyl-tRNA(Lys) + AMP + diphosphate. This chain is Lysine--tRNA ligase, found in Prochlorococcus marinus (strain MIT 9211).